The chain runs to 239 residues: MGKSLIQQRRGKGTTTFRAPSHRYRGAVRYVPLNLTKEKTLVGKVVEILHDPGRTAPVARVKFENGMEKLIIAPEGILVGEEIAIGPNAPIKIGNTLPLAMIPEGSYVYDIEGTPGDGGKYVRAGGVYALVVSREKDKVIVQLPSGELKQFNPMCRATIGVVAGGGRLEKPIVKAGKAYYIAKARNRFWPKPRGVKMNAVNHPHGGKEHHIGRPSTVSRRAPPGRKVGHIAARRTGRRK.

Positions valine 200 to lysine 239 are disordered. The span at proline 222–lysine 239 shows a compositional bias: basic residues.

It belongs to the universal ribosomal protein uL2 family. In terms of assembly, part of the 50S ribosomal subunit. Forms a bridge to the 30S subunit in the 70S ribosome.

In terms of biological role, one of the primary rRNA binding proteins. Required for association of the 30S and 50S subunits to form the 70S ribosome, for tRNA binding and peptide bond formation. It has been suggested to have peptidyltransferase activity; this is somewhat controversial. Makes several contacts with the 16S rRNA in the 70S ribosome. The sequence is that of Large ribosomal subunit protein uL2 from Thermococcus onnurineus (strain NA1).